Reading from the N-terminus, the 242-residue chain is NAD-dependent protein deacetylase 1 (242 aa).

The region spanning 1–242 (MTITSWLAAS…LNEQLAEVDP (242 aa)) is the Deacetylase sirtuin-type domain. Alanine 19, threonine 23, phenylalanine 30, arginine 31, glutamine 97, valine 99, aspartate 100, and histidine 115 together coordinate NAD(+). Phenylalanine 30 serves as a coordination point for nicotinamide. Positions 99 and 100 each coordinate nicotinamide. Histidine 115 (proton acceptor) is an active-site residue. Cysteine 123, cysteine 126, cysteine 142, and cysteine 144 together coordinate Zn(2+). Serine 182, serine 183, asparagine 207, and isoleucine 226 together coordinate NAD(+).

The protein belongs to the sirtuin family. Class U subfamily. The cofactor is Zn(2+).

It is found in the cytoplasm. It carries out the reaction N(6)-acetyl-L-lysyl-[protein] + NAD(+) + H2O = 2''-O-acetyl-ADP-D-ribose + nicotinamide + L-lysyl-[protein]. In terms of biological role, NAD-dependent protein deacetylase which modulates the activities of several enzymes which are inactive in their acetylated form. This chain is NAD-dependent protein deacetylase 1, found in Geobacillus kaustophilus (strain HTA426).